We begin with the raw amino-acid sequence, 277 residues long: 4-hydroxy-3-methylbut-2-enyl diphosphate reductase (277 aa).

A [4Fe-4S] cluster-binding site is contributed by C12. H36 and H70 together coordinate (2E)-4-hydroxy-3-methylbut-2-enyl diphosphate. The dimethylallyl diphosphate site is built by H36 and H70. H36 and H70 together coordinate isopentenyl diphosphate. Residue C92 participates in [4Fe-4S] cluster binding. H120 lines the (2E)-4-hydroxy-3-methylbut-2-enyl diphosphate pocket. Dimethylallyl diphosphate is bound at residue H120. Position 120 (H120) interacts with isopentenyl diphosphate. E122 (proton donor) is an active-site residue. T158 provides a ligand contact to (2E)-4-hydroxy-3-methylbut-2-enyl diphosphate. Residue C186 coordinates [4Fe-4S] cluster. S214, N216, and S258 together coordinate (2E)-4-hydroxy-3-methylbut-2-enyl diphosphate. Residues S214, N216, and S258 each coordinate dimethylallyl diphosphate. 3 residues coordinate isopentenyl diphosphate: S214, N216, and S258.

It belongs to the IspH family. It depends on [4Fe-4S] cluster as a cofactor.

The enzyme catalyses isopentenyl diphosphate + 2 oxidized [2Fe-2S]-[ferredoxin] + H2O = (2E)-4-hydroxy-3-methylbut-2-enyl diphosphate + 2 reduced [2Fe-2S]-[ferredoxin] + 2 H(+). It carries out the reaction dimethylallyl diphosphate + 2 oxidized [2Fe-2S]-[ferredoxin] + H2O = (2E)-4-hydroxy-3-methylbut-2-enyl diphosphate + 2 reduced [2Fe-2S]-[ferredoxin] + 2 H(+). It functions in the pathway isoprenoid biosynthesis; dimethylallyl diphosphate biosynthesis; dimethylallyl diphosphate from (2E)-4-hydroxy-3-methylbutenyl diphosphate: step 1/1. Its pathway is isoprenoid biosynthesis; isopentenyl diphosphate biosynthesis via DXP pathway; isopentenyl diphosphate from 1-deoxy-D-xylulose 5-phosphate: step 6/6. Its function is as follows. Catalyzes the conversion of 1-hydroxy-2-methyl-2-(E)-butenyl 4-diphosphate (HMBPP) into a mixture of isopentenyl diphosphate (IPP) and dimethylallyl diphosphate (DMAPP). Acts in the terminal step of the DOXP/MEP pathway for isoprenoid precursor biosynthesis. The sequence is that of 4-hydroxy-3-methylbut-2-enyl diphosphate reductase from Campylobacter jejuni subsp. jejuni serotype O:6 (strain 81116 / NCTC 11828).